The sequence spans 736 residues: Oxysterol-binding protein-related protein 9 (736 aa).

N-acetylalanine is present on Ala-2. One can recognise a PH domain in the interval 2 to 99 (ASIVEGPLSK…WIHALEETIL (98 aa)). The tract at residues 209-368 (LEPVISTMPS…RDDDGEAGSV (160 aa)) is disordered. Positions 253–274 (TPTPNSTGSGNSPPSSSLTPPS) are enriched in low complexity. A phosphoserine mark is found at Ser-306, Ser-324, Ser-325, Ser-326, and Ser-329. Composition is skewed to polar residues over residues 314–329 (SSGSASVLTHSSSGNS) and 336–348 (TESLNSSMSNGTS). Ser-611 carries the phosphoserine modification.

Belongs to the OSBP family. In terms of assembly, heterodimer with OSBPL11. Interacts with OSBPL10.

Its subcellular location is the late endosome membrane. The protein localises to the golgi apparatus. It is found in the trans-Golgi network membrane. It carries out the reaction a 1,2-diacyl-sn-glycero-3-phospho-(1D-myo-inositol 4-phosphate)(out) + a 1,2-diacyl-sn-glycero-3-phospho-L-serine(in) = a 1,2-diacyl-sn-glycero-3-phospho-(1D-myo-inositol 4-phosphate)(in) + a 1,2-diacyl-sn-glycero-3-phospho-L-serine(out). Interacts with OSBPL11 to function as lipid transfer proteins. Together they form a heterodimer that localizes at the ER-trans-Golgi membrane contact sites, and exchanges phosphatidylserine (1,2-diacyl-sn-glycero-3-phospho-L-serine, PS) for phosphatidylinositol-4-phosphate (1,2-diacyl-sn-glycero-3-phospho-(1D-myo-inositol 4-phosphate), PI(4)P) between the two organelles, a step that is critical for sphingomyelin synthesis in the Golgi complex. This is Oxysterol-binding protein-related protein 9 (Osbpl9) from Mus musculus (Mouse).